A 309-amino-acid polypeptide reads, in one-letter code: Putative lipid kinase YtlR (309 aa).

A DAGKc domain is found at 1 to 134 (MSHWFFIINP…FHLGSVNFLQ (134 aa)). Residues 9 to 13 (NPTAG), threonine 40, and 69 to 75 (GDGTMHE) contribute to the ATP site. The Mg(2+) site is built by asparagine 229, glutamate 232, and threonine 234. Glutamate 289 (proton acceptor) is an active-site residue.

It belongs to the diacylglycerol/lipid kinase family. Mg(2+) is required as a cofactor.

Its function is as follows. May catalyze the ATP-dependent phosphorylation of lipids other than diacylglycerol (DAG). In fact, is not able to exhibit diacylglycerol kinase activity in vitro. The sequence is that of Putative lipid kinase YtlR (ytlR) from Bacillus subtilis (strain 168).